The chain runs to 267 residues: Acyl-[acyl-carrier-protein]--UDP-N-acetylglucosamine O-acyltransferase (267 aa).

This sequence belongs to the transferase hexapeptide repeat family. LpxA subfamily. Homotrimer.

It localises to the cytoplasm. It carries out the reaction a (3R)-hydroxyacyl-[ACP] + UDP-N-acetyl-alpha-D-glucosamine = a UDP-3-O-[(3R)-3-hydroxyacyl]-N-acetyl-alpha-D-glucosamine + holo-[ACP]. Its pathway is glycolipid biosynthesis; lipid IV(A) biosynthesis; lipid IV(A) from (3R)-3-hydroxytetradecanoyl-[acyl-carrier-protein] and UDP-N-acetyl-alpha-D-glucosamine: step 1/6. Its function is as follows. Involved in the biosynthesis of lipid A, a phosphorylated glycolipid that anchors the lipopolysaccharide to the outer membrane of the cell. The polypeptide is Acyl-[acyl-carrier-protein]--UDP-N-acetylglucosamine O-acyltransferase (Cupriavidus pinatubonensis (strain JMP 134 / LMG 1197) (Cupriavidus necator (strain JMP 134))).